Consider the following 265-residue polypeptide: Cytochrome c oxidase subunit 3 (265 aa).

The next 6 helical transmembrane spans lie at glycine 41–tryptophan 61, glycine 85–phenylalanine 105, threonine 137–glycine 157, alanine 162–methionine 182, phenylalanine 200–isoleucine 220, and tryptophan 245–isoleucine 265.

The protein belongs to the cytochrome c oxidase subunit 3 family. In terms of assembly, component of the cytochrome c oxidase (complex IV, CIV), a multisubunit enzyme composed of a catalytic core of 3 subunits and several supernumerary subunits. The complex exists as a monomer or a dimer and forms supercomplexes (SCs) in the inner mitochondrial membrane with ubiquinol-cytochrome c oxidoreductase (cytochrome b-c1 complex, complex III, CIII).

The protein localises to the mitochondrion inner membrane. The enzyme catalyses 4 Fe(II)-[cytochrome c] + O2 + 8 H(+)(in) = 4 Fe(III)-[cytochrome c] + 2 H2O + 4 H(+)(out). Its function is as follows. Component of the cytochrome c oxidase, the last enzyme in the mitochondrial electron transport chain which drives oxidative phosphorylation. The respiratory chain contains 3 multisubunit complexes succinate dehydrogenase (complex II, CII), ubiquinol-cytochrome c oxidoreductase (cytochrome b-c1 complex, complex III, CIII) and cytochrome c oxidase (complex IV, CIV), that cooperate to transfer electrons derived from NADH and succinate to molecular oxygen, creating an electrochemical gradient over the inner membrane that drives transmembrane transport and the ATP synthase. Cytochrome c oxidase is the component of the respiratory chain that catalyzes the reduction of oxygen to water. Electrons originating from reduced cytochrome c in the intermembrane space (IMS) are transferred via the dinuclear copper A center (CU(A)) of subunit 2 and heme A of subunit 1 to the active site in subunit 1, a binuclear center (BNC) formed by heme A3 and copper B (CU(B)). The BNC reduces molecular oxygen to 2 water molecules using 4 electrons from cytochrome c in the IMS and 4 protons from the mitochondrial matrix. In Arabidopsis thaliana (Mouse-ear cress), this protein is Cytochrome c oxidase subunit 3 (COX3).